A 260-amino-acid chain; its full sequence is Resolvase (260 aa).

The Tyr recombinase domain occupies 38-241 (ELPKYLLAPE…FALDVAARHR (204 aa)). Active-site residues include Arg-73, Lys-105, His-193, Arg-196, and His-219. Residue Tyr-228 is the O-(3'-phospho-DNA)-tyrosine intermediate of the active site.

The protein belongs to the 'phage' integrase family.

This resolvase acts at the RfsF equivalent resolution sequence of pColBM-CL139. The sequence is that of Resolvase (resD) from Escherichia coli.